A 166-amino-acid polypeptide reads, in one-letter code: NAD(P)H-quinone oxidoreductase subunit I, chloroplastic (166 aa).

4Fe-4S ferredoxin-type domains lie at 55-84 (GRIH…VDWK) and 95-124 (LNYS…MTEE). The [4Fe-4S] cluster site is built by Cys-64, Cys-67, Cys-70, Cys-74, Cys-104, Cys-107, Cys-110, and Cys-114.

It belongs to the complex I 23 kDa subunit family. NDH is composed of at least 16 different subunits, 5 of which are encoded in the nucleus. [4Fe-4S] cluster serves as cofactor.

It is found in the plastid. The protein resides in the chloroplast thylakoid membrane. It catalyses the reaction a plastoquinone + NADH + (n+1) H(+)(in) = a plastoquinol + NAD(+) + n H(+)(out). The catalysed reaction is a plastoquinone + NADPH + (n+1) H(+)(in) = a plastoquinol + NADP(+) + n H(+)(out). In terms of biological role, NDH shuttles electrons from NAD(P)H:plastoquinone, via FMN and iron-sulfur (Fe-S) centers, to quinones in the photosynthetic chain and possibly in a chloroplast respiratory chain. The immediate electron acceptor for the enzyme in this species is believed to be plastoquinone. Couples the redox reaction to proton translocation, and thus conserves the redox energy in a proton gradient. The sequence is that of NAD(P)H-quinone oxidoreductase subunit I, chloroplastic from Tridax balbisioides (Coatbuttons).